The primary structure comprises 262 residues: Small ribosomal subunit protein uS2 (262 aa).

It belongs to the universal ribosomal protein uS2 family.

The chain is Small ribosomal subunit protein uS2 from Borreliella afzelii (strain PKo) (Borrelia afzelii).